Here is a 179-residue protein sequence, read N- to C-terminus: Large ribosomal subunit protein uL5 (179 aa).

The protein belongs to the universal ribosomal protein uL5 family. In terms of assembly, part of the 50S ribosomal subunit; part of the 5S rRNA/L5/L18/L25 subcomplex. Contacts the 5S rRNA and the P site tRNA. Forms a bridge to the 30S subunit in the 70S ribosome.

Its function is as follows. This is one of the proteins that bind and probably mediate the attachment of the 5S RNA into the large ribosomal subunit, where it forms part of the central protuberance. In the 70S ribosome it contacts protein S13 of the 30S subunit (bridge B1b), connecting the 2 subunits; this bridge is implicated in subunit movement. Contacts the P site tRNA; the 5S rRNA and some of its associated proteins might help stabilize positioning of ribosome-bound tRNAs. In Glaesserella parasuis serovar 5 (strain SH0165) (Haemophilus parasuis), this protein is Large ribosomal subunit protein uL5.